A 509-amino-acid polypeptide reads, in one-letter code: Probable basic-leucine zipper transcription factor H (509 aa).

Positions 1 to 42 (MMNSPRSLDSSDGSVDSSSVYSGTSSFGSSFTSSTGSGFTNS) are disordered. Positions 10–39 (SSDGSVDSSSVYSGTSSFGSSFTSSTGSGF) are enriched in low complexity. A bZIP domain is found at 50–113 (AKKKKIRQMQ…NENYLKINQL (64 aa)). Positions 51 to 77 (KKKKIRQMQNRQSAAQYRERKKEYLEK) are basic motif. The segment at 78 to 99 (LETIVDNLESDRNQLLQQTKQL) is leucine-zipper. 4 disordered regions span residues 134 to 185 (LLSK…SNNG), 223 to 275 (FSHL…SRFN), 290 to 414 (IENV…IINN), and 465 to 509 (SNNN…GIPK). Composition is skewed to low complexity over residues 226–248 (LQQQ…SPIP), 255–269 (PIQQ…QNIN), 292–350 (NVNN…SNRS), 361–414 (QQQQ…IINN), 465–483 (SNNN…NSPS), and 490–509 (NGGI…GIPK).

The protein belongs to the bZIP family.

The protein localises to the nucleus. Its function is as follows. Probable transcriptional regulator. The polypeptide is Probable basic-leucine zipper transcription factor H (bzpH) (Dictyostelium discoideum (Social amoeba)).